Consider the following 657-residue polypeptide: MTQLAIGKPTPLGAHYDGQGVNFTLFSAHAERVELCVFDANGQEHRYDLPGHSGDIWHGYLPDARPGLRYGYRVHGPWQPAEGHRFNPAKLLIDPCARQIDGEFKDNPLLHAGHNEPDYRDNAAIAPKCVVVVDHYDWEDDAPPRTPWGSTIIYEAHVKGLTYLHPEIPVEIRGTYKALGHPVMINYLKQLGITALELLPVAQFASEPRLQRMGLSNYWGYNPVAMFALHPAYACSPETALDEFRDAIKALHKAGIEVILDIVLNHSAELDLDGPLFSLRGIDNRSYYWIREDGDYHNWTGCGNTLNLSHPAVVDYASACLRYWVETCHVDGFRFDLAAVMGRTPEFRQDAPLFTAIQNCPVLSQVKLIAEPWDIAPGGYQVGNFPPLFAEWNDHFRDAARRFWLHYDLPLGAFAGRFAASSDVFKRNDRLPSAAINLVTAHDGFTLRDCVCFNHKHNEANGEENRDGTNNNYSNNHGKEGLGGTLDLVERRRDSIHALLTTLLLSQGTPMLLAGDEHGHSQHGNNNAYCQDNQLTWLDWSQASSGLTAFTAALIHLRKRIPALVENRWWEEGDGNVRWLNRYAQPLSTDEWQNGPKQLQILLSDRFLIAINATLEVTEIVLPAGEWHAIPPFAGEDNPVITAVWQGPAHGLCVFQR.

The active-site Nucleophile is D336. Catalysis depends on E371, which acts as the Proton donor. The tract at residues A460 to K479 is disordered.

The protein belongs to the glycosyl hydrolase 13 family.

It catalyses the reaction Hydrolysis of (1-&gt;6)-alpha-D-glucosidic linkages to branches with degrees of polymerization of three or four glucose residues in limit dextrin.. Its pathway is glycan degradation; glycogen degradation. Removes maltotriose and maltotetraose chains that are attached by 1,6-alpha-linkage to the limit dextrin main chain, generating a debranched limit dextrin. In Escherichia coli (strain SMS-3-5 / SECEC), this protein is Glycogen debranching enzyme.